We begin with the raw amino-acid sequence, 314 residues long: Leucine-rich repeat-containing protein 52 (314 aa).

An N-terminal signal peptide occupies residues 1–23 (MSLASGPSSKLLLFSLGMGLVSG). The LRRNT domain occupies 24-53 (SKCPNKCVCQDQEVACIDLHLTEYPADIPL). Over 24-244 (SKCPNKCVCQ…MCITHLDQQD (221 aa)) the chain is Extracellular. 2 disulfide bridges follow: cysteine 26/cysteine 32 and cysteine 30/cysteine 39. 5 LRR repeats span residues 54 to 73 (NTRR…ALQL), 78 to 99 (DLVY…TFIG), 102 to 123 (RLIY…SFSV), 126 to 148 (NLVR…VFAN), and 151 to 172 (SLRY…GFHH). Residues asparagine 112, asparagine 131, and asparagine 148 are each glycosylated (N-linked (GlcNAc...) asparagine). One can recognise an LRRCT domain in the interval 184-238 (NPWICNCSFLDFTIHLLVSHMDHPDAQNATCTEPAELKGWPITKVGNPLQYMCIT). Disulfide bonds link cysteine 188–cysteine 214 and cysteine 190–cysteine 236. N-linked (GlcNAc...) asparagine glycosylation is found at asparagine 189 and asparagine 211. A helical membrane pass occupies residues 245-265 (YIFLLLIGFCIFAAGTVAAWL). At 266–314 (TGVCAVLYQNALRTSSGDDTEDETGSRFANQIFRSNTHLGPIRRFPELI) the chain is on the cytoplasmic side.

In terms of assembly, interacts with KCNMA1. Interacts with KCNU1; this interaction may be required for LRRC52 stability and changes the channel gating properties. N-glycosylated. In terms of tissue distribution, testis-specific (at protein level). At the mRNA level, also detected in kidney, ventricle, spinal cord and skeletal muscle, although at lower levels compared to testis. Expression in testis at the protein level requires the presence of KCNU1.

It is found in the cell membrane. Its function is as follows. Auxiliary protein of the large-conductance, voltage and calcium-activated potassium channel (BK alpha). Modulates gating properties by producing a marked shift in the BK channel's voltage dependence of activation in the hyperpolarizing direction, and in the absence of calcium. KCNU1 channel auxiliary protein. Modulates KCNU1 gating properties, shifting KCNU1 gating to more negative potentials at a given pH. The sequence is that of Leucine-rich repeat-containing protein 52 (Lrrc52) from Mus musculus (Mouse).